The primary structure comprises 238 residues: MSSRTGHEKGRRTSQSKTGHFKRSGKPNRVEDQTTRRHPTRTAKAKAKAKANKPRVDLQNRKVIIFNKPYDTLSQFTDGDGRKTLADYIPVKDVYAAGRLDRDSEGLMVLTNDGILQAKLTQPKSKSPKTYWVQVDGAPQEQDLEKLRKGVELKDGMTLPAKVEVIDAPTIWERNPPVRFRANIPTTWLAITIIEGRNRQVRRMTAHIGFPTLRLVRYSMGDITLGDLQPGQWKEIQL.

A disordered region spans residues 1 to 54; sequence MSSRTGHEKGRRTSQSKTGHFKRSGKPNRVEDQTTRRHPTRTAKAKAKAKANKP. Basic residues-rich tracts occupy residues 9-26 and 36-53; these read KGRRTSQSKTGHFKRSGK and RRHPTRTAKAKAKAKANK. The Nucleophile role is filled by Asp101.

This sequence belongs to the pseudouridine synthase RsuA family.

It carries out the reaction uridine(2457) in 23S rRNA = pseudouridine(2457) in 23S rRNA. In terms of biological role, responsible for synthesis of pseudouridine from uracil-2457 in 23S ribosomal RNA. This is Ribosomal large subunit pseudouridine synthase E (rluE) from Vibrio parahaemolyticus serotype O3:K6 (strain RIMD 2210633).